The chain runs to 236 residues: 15,16-dihydrobiliverdin:ferredoxin oxidoreductase (236 aa).

This sequence belongs to the HY2 family.

It carries out the reaction 15,16-dihydrobiliverdin + oxidized 2[4Fe-4S]-[ferredoxin] = biliverdin IXalpha + reduced 2[4Fe-4S]-[ferredoxin] + 2 H(+). Its function is as follows. Catalyzes the two-electron reduction of biliverdin IX-alpha at the C15 methine bridge. The polypeptide is 15,16-dihydrobiliverdin:ferredoxin oxidoreductase (Prochlorococcus marinus (strain AS9601)).